We begin with the raw amino-acid sequence, 240 residues long: Large ribosomal subunit protein uL2 (240 aa).

Residues methionine 1 to glycine 11 are compositionally biased toward polar residues. Disordered regions lie at residues methionine 1–valine 28 and glycine 206–lysine 240. 2 stretches are compositionally biased toward basic residues: residues glycine 13–valine 28 and serine 224–lysine 240.

This sequence belongs to the universal ribosomal protein uL2 family. Part of the 50S ribosomal subunit. Forms a bridge to the 30S subunit in the 70S ribosome.

One of the primary rRNA binding proteins. Required for association of the 30S and 50S subunits to form the 70S ribosome, for tRNA binding and peptide bond formation. It has been suggested to have peptidyltransferase activity; this is somewhat controversial. Makes several contacts with the 16S rRNA in the 70S ribosome. This chain is Large ribosomal subunit protein uL2, found in Methanococcus maripaludis (strain C5 / ATCC BAA-1333).